Consider the following 164-residue polypeptide: MADS-box transcription factor 51 (164 aa).

Positions 2–62 (ARRGRVQLRR…GKLYEYSSSS (61 aa)) constitute an MADS-box domain. Residues 133–164 (TKSKKMLAKQNGEGSRSRANSSGSRGQEEGSA) are disordered.

In terms of tissue distribution, widely expressed.

It localises to the nucleus. Its function is as follows. Probable transcription factor involved in the regulation of flowering time under short day (SD) conditions. Functions as a promoter of flowering under SD conditions, upstream of EHD1, HD3A and MADS14, but downstream of GIGANTEA (GI). May transmit a SD promotion signal from GI to EHD1. Functions independently of MADS50 to control flowering time. In Oryza sativa subsp. japonica (Rice), this protein is MADS-box transcription factor 51.